Here is a 119-residue protein sequence, read N- to C-terminus: Protein TusC (119 aa).

The protein belongs to the DsrF/TusC family. Heterohexamer, formed by a dimer of trimers. The hexameric TusBCD complex contains 2 copies each of TusB, TusC and TusD. The TusBCD complex interacts with TusE.

The protein localises to the cytoplasm. Part of a sulfur-relay system required for 2-thiolation of 5-methylaminomethyl-2-thiouridine (mnm(5)s(2)U) at tRNA wobble positions. This Buchnera aphidicola subsp. Acyrthosiphon pisum (strain 5A) protein is Protein TusC.